The following is a 664-amino-acid chain: DNA ligase (664 aa).

Residues 32–36 and 80–81 each bind NAD(+); these read DKEYD and SL. K122 functions as the N6-AMP-lysine intermediate in the catalytic mechanism. NAD(+) is bound by residues R144, E178, and K314. C407, C410, C423, and C429 together coordinate Zn(2+). The BRCT domain maps to 587 to 664; it reads IDENPFMDKT…NEEEFSNKIK (78 aa).

This sequence belongs to the NAD-dependent DNA ligase family. LigA subfamily. Mg(2+) serves as cofactor. Requires Mn(2+) as cofactor.

The catalysed reaction is NAD(+) + (deoxyribonucleotide)n-3'-hydroxyl + 5'-phospho-(deoxyribonucleotide)m = (deoxyribonucleotide)n+m + AMP + beta-nicotinamide D-nucleotide.. DNA ligase that catalyzes the formation of phosphodiester linkages between 5'-phosphoryl and 3'-hydroxyl groups in double-stranded DNA using NAD as a coenzyme and as the energy source for the reaction. It is essential for DNA replication and repair of damaged DNA. The polypeptide is DNA ligase (Clostridium botulinum (strain Langeland / NCTC 10281 / Type F)).